Reading from the N-terminus, the 932-residue chain is Leucine--tRNA ligase (932 aa).

The 'HIGH' region signature appears at 38 to 48 (PYLNGNLHAGH). The short motif at 630–634 (KMSKS) is the 'KMSKS' region element. K633 provides a ligand contact to ATP.

Belongs to the class-I aminoacyl-tRNA synthetase family.

The protein localises to the cytoplasm. The catalysed reaction is tRNA(Leu) + L-leucine + ATP = L-leucyl-tRNA(Leu) + AMP + diphosphate. The chain is Leucine--tRNA ligase from Archaeoglobus fulgidus (strain ATCC 49558 / DSM 4304 / JCM 9628 / NBRC 100126 / VC-16).